Here is a 180-residue protein sequence, read N- to C-terminus: Large ribosomal subunit protein mL41 (180 aa).

A mitochondrion-targeting transit peptide spans 1-21; sequence MKLVLVSTRGVRSLNSTNFPA.

The protein belongs to the mitochondrion-specific ribosomal protein mL41 family. In terms of assembly, component of the mitochondrial ribosome large subunit (39S) which comprises a 16S rRNA and about 50 distinct proteins.

Its subcellular location is the mitochondrion. The chain is Large ribosomal subunit protein mL41 (mrpl-41) from Caenorhabditis elegans.